A 1087-amino-acid chain; its full sequence is Gelsolin-related protein of 125 kDa (1087 aa).

Positions 1-40 (MEEDNIVDSKEIENNVEDKKEETPSSSPSPSSSLQQQQEE) are disordered. Basic and acidic residues predominate over residues 7–23 (VDSKEIENNVEDKKEET). Residues 24–40 (PSSSPSPSSSLQQQQEE) show a composition bias toward low complexity. 4 Gelsolin-like repeats span residues 73–146 (PFHF…PTFL), 183–286 (FLFK…FSKW), 335–442 (GKLL…FGTE), and 465–538 (TQLF…DNFW). Residues 550-598 (INTFINENKEEKEKEEEEKEEEEEEEEEEEEEEEEEKDNNKTTTIIKHL) are a coiled coil. A disordered region spans residues 555-592 (NENKEEKEKEEEEKEEEEEEEEEEEEEEEEEKDNNKTT). The segment covering 562–586 (EKEEEEKEEEEEEEEEEEEEEEEEK) has biased composition (acidic residues). Residues 614–692 (IFKADQINPF…EQYNESPLFK (79 aa)) form a Gelsolin-like 5 repeat. Positions 710 to 912 (IISYKQKLAE…ETVNEENEVG (203 aa)) form a coiled coil. Basic and acidic residues-rich tracts occupy residues 732–770 (KQQQEQEQEQQQKENNKIVEEVKEEVKEEDVKEEVKEEE), 779–808 (EEVKEVAKEETKEEIKEEVNDEATEVKEVN), 817–840 (EEVKEEVKVEVKEEEVKGEAKEEE), and 849–900 (EEVK…KVNE). The segment at 732 to 1087 (KQQQEQEQEQ…HNRSSSLTHA (356 aa)) is disordered. Over residues 901-910 (ENETVNEENE) the composition is skewed to acidic residues. 2 stretches are compositionally biased toward polar residues: residues 925–939 (ANSSSTISSPENEGS) and 950–961 (EPITPSVVSSSG). Residues 983-1002 (QGRKGGRKSHGKNQPQHKKN) show a composition bias toward basic residues. The segment covering 1018–1040 (KSLNLDIDNQSFDLNSINNNNSV) has biased composition (polar residues). Positions 1047 to 1065 (SSPLSFSSSSINSNSTHNT) are enriched in low complexity. Basic residues predominate over residues 1066–1080 (PSKKNKNKNKKKHNR).

Belongs to the villin/gelsolin family. In terms of assembly, interacts with rasD and abpC.

It localises to the cytoplasmic vesicle. In terms of biological role, involved in phototaxis. Required for coupling photodetection to the locomotory machinery of slugs. May be essential in the natural environment for the propagation of spores. This chain is Gelsolin-related protein of 125 kDa (gnrA), found in Dictyostelium discoideum (Social amoeba).